Here is a 453-residue protein sequence, read N- to C-terminus: Bifunctional protein GlmU (453 aa).

Positions 1–231 (MERSSLAVIL…EKELTGCNNR (231 aa)) are pyrophosphorylase. UDP-N-acetyl-alpha-D-glucosamine is bound by residues 10–13 (LAAG), Lys24, Gln77, 82–83 (GT), 105–107 (YGD), Gly143, Glu157, Asn172, and Asn229. Asp107 is a Mg(2+) binding site. Asn229 lines the Mg(2+) pocket. Positions 232–252 (AELAFIERLWQERRRHELMVD) are linker. The tract at residues 253-453 (GVSMIAPETV…AQKEAKKKSS (201 aa)) is N-acetyltransferase. The UDP-N-acetyl-alpha-D-glucosamine site is built by Arg318 and Lys336. His348 functions as the Proton acceptor in the catalytic mechanism. Tyr351 and Asn362 together coordinate UDP-N-acetyl-alpha-D-glucosamine. Residues Ala365, 371-372 (NY), Ser390, Ser408, and Arg425 contribute to the acetyl-CoA site.

It in the N-terminal section; belongs to the N-acetylglucosamine-1-phosphate uridyltransferase family. In the C-terminal section; belongs to the transferase hexapeptide repeat family. In terms of assembly, homotrimer. Requires Mg(2+) as cofactor.

The protein resides in the cytoplasm. The enzyme catalyses alpha-D-glucosamine 1-phosphate + acetyl-CoA = N-acetyl-alpha-D-glucosamine 1-phosphate + CoA + H(+). It carries out the reaction N-acetyl-alpha-D-glucosamine 1-phosphate + UTP + H(+) = UDP-N-acetyl-alpha-D-glucosamine + diphosphate. Its pathway is nucleotide-sugar biosynthesis; UDP-N-acetyl-alpha-D-glucosamine biosynthesis; N-acetyl-alpha-D-glucosamine 1-phosphate from alpha-D-glucosamine 6-phosphate (route II): step 2/2. It participates in nucleotide-sugar biosynthesis; UDP-N-acetyl-alpha-D-glucosamine biosynthesis; UDP-N-acetyl-alpha-D-glucosamine from N-acetyl-alpha-D-glucosamine 1-phosphate: step 1/1. It functions in the pathway bacterial outer membrane biogenesis; LPS lipid A biosynthesis. Functionally, catalyzes the last two sequential reactions in the de novo biosynthetic pathway for UDP-N-acetylglucosamine (UDP-GlcNAc). The C-terminal domain catalyzes the transfer of acetyl group from acetyl coenzyme A to glucosamine-1-phosphate (GlcN-1-P) to produce N-acetylglucosamine-1-phosphate (GlcNAc-1-P), which is converted into UDP-GlcNAc by the transfer of uridine 5-monophosphate (from uridine 5-triphosphate), a reaction catalyzed by the N-terminal domain. This chain is Bifunctional protein GlmU, found in Agrobacterium fabrum (strain C58 / ATCC 33970) (Agrobacterium tumefaciens (strain C58)).